We begin with the raw amino-acid sequence, 421 residues long: Testin (421 aa).

The PET domain maps to 92–199; that stretch reads MILTNPVAAK…GDVKLPREMD (108 aa). The segment at 133–164 is disordered; sequence EKQPVAGSEGAQYRKKQLAKQLPAHDQDPSKC. Residues 155-164 are compositionally biased toward basic and acidic residues; sequence PAHDQDPSKC. 3 consecutive LIM zinc-binding domains span residues 234–297, 299–359, and 362–421; these read YSCY…CDSE, PRCA…NHAV, and QGCH…KMMS.

It belongs to the prickle / espinas / testin family. In terms of assembly, interacts via LIM domain 1 with ZYX. Interacts (via LIM domain 3) with ENAH and VASP. Interacts with ALKBH4, talin, actin, alpha-actinin, GRIP1 and PXN. Interacts (via LIM domain 2) with ACTL7A (via N-terminus). Heterodimer with ACTL7A; the heterodimer interacts with ENAH to form a heterotrimer.

Its subcellular location is the cytoplasm. The protein resides in the cell junction. It is found in the focal adhesion. In terms of biological role, scaffold protein that may play a role in cell adhesion, cell spreading and in the reorganization of the actin cytoskeleton. Plays a role in the regulation of cell proliferation. May act as a tumor suppressor. This Canis lupus familiaris (Dog) protein is Testin (TES).